Consider the following 322-residue polypeptide: Phosphatidylserine decarboxylase proenzyme (322 aa).

Residues aspartate 90, histidine 147, and serine 254 each act as charge relay system; for autoendoproteolytic cleavage activity in the active site. The Schiff-base intermediate with substrate; via pyruvic acid; for decarboxylase activity role is filled by serine 254. A Pyruvic acid (Ser); by autocatalysis modification is found at serine 254. The tract at residues 293 to 322 is disordered; it reads PDAEPAPLPAEEIEAEHDASPLVDDKKDQV. Positions 308–322 are enriched in basic and acidic residues; it reads EHDASPLVDDKKDQV.

The protein belongs to the phosphatidylserine decarboxylase family. PSD-B subfamily. Prokaryotic type I sub-subfamily. Heterodimer of a large membrane-associated beta subunit and a small pyruvoyl-containing alpha subunit. The cofactor is pyruvate. In terms of processing, is synthesized initially as an inactive proenzyme. Formation of the active enzyme involves a self-maturation process in which the active site pyruvoyl group is generated from an internal serine residue via an autocatalytic post-translational modification. Two non-identical subunits are generated from the proenzyme in this reaction, and the pyruvate is formed at the N-terminus of the alpha chain, which is derived from the carboxyl end of the proenzyme. The autoendoproteolytic cleavage occurs by a canonical serine protease mechanism, in which the side chain hydroxyl group of the serine supplies its oxygen atom to form the C-terminus of the beta chain, while the remainder of the serine residue undergoes an oxidative deamination to produce ammonia and the pyruvoyl prosthetic group on the alpha chain. During this reaction, the Ser that is part of the protease active site of the proenzyme becomes the pyruvoyl prosthetic group, which constitutes an essential element of the active site of the mature decarboxylase.

It is found in the cell membrane. The catalysed reaction is a 1,2-diacyl-sn-glycero-3-phospho-L-serine + H(+) = a 1,2-diacyl-sn-glycero-3-phosphoethanolamine + CO2. The protein operates within phospholipid metabolism; phosphatidylethanolamine biosynthesis; phosphatidylethanolamine from CDP-diacylglycerol: step 2/2. Functionally, catalyzes the formation of phosphatidylethanolamine (PtdEtn) from phosphatidylserine (PtdSer). This chain is Phosphatidylserine decarboxylase proenzyme, found in Escherichia coli O9:H4 (strain HS).